A 137-amino-acid chain; its full sequence is Holo-[acyl-carrier-protein] synthase (137 aa).

Mg(2+) contacts are provided by Asp8 and Glu57.

This sequence belongs to the P-Pant transferase superfamily. AcpS family. Mg(2+) serves as cofactor.

It is found in the cytoplasm. The enzyme catalyses apo-[ACP] + CoA = holo-[ACP] + adenosine 3',5'-bisphosphate + H(+). Transfers the 4'-phosphopantetheine moiety from coenzyme A to a Ser of acyl-carrier-protein. The chain is Holo-[acyl-carrier-protein] synthase from Cereibacter sphaeroides (strain ATCC 17023 / DSM 158 / JCM 6121 / CCUG 31486 / LMG 2827 / NBRC 12203 / NCIMB 8253 / ATH 2.4.1.) (Rhodobacter sphaeroides).